The primary structure comprises 106 residues: Large ribosomal subunit protein uL24 (106 aa).

This sequence belongs to the universal ribosomal protein uL24 family. Part of the 50S ribosomal subunit.

Functionally, one of two assembly initiator proteins, it binds directly to the 5'-end of the 23S rRNA, where it nucleates assembly of the 50S subunit. In terms of biological role, one of the proteins that surrounds the polypeptide exit tunnel on the outside of the subunit. This Desulforudis audaxviator (strain MP104C) protein is Large ribosomal subunit protein uL24.